The chain runs to 235 residues: Small ribosomal subunit protein uS2 (235 aa).

It belongs to the universal ribosomal protein uS2 family.

This chain is Small ribosomal subunit protein uS2, found in Caldanaerobacter subterraneus subsp. tengcongensis (strain DSM 15242 / JCM 11007 / NBRC 100824 / MB4) (Thermoanaerobacter tengcongensis).